The sequence spans 338 residues: Aspartate carbamoyltransferase catalytic subunit (338 aa).

Positions 72 and 73 each coordinate carbamoyl phosphate. Lysine 100 contacts L-aspartate. Arginine 122, histidine 152, and glutamine 155 together coordinate carbamoyl phosphate. L-aspartate is bound by residues arginine 186 and arginine 243. Glycine 284 and proline 285 together coordinate carbamoyl phosphate.

The protein belongs to the aspartate/ornithine carbamoyltransferase superfamily. ATCase family. As to quaternary structure, heterododecamer (2C3:3R2) of six catalytic PyrB chains organized as two trimers (C3), and six regulatory PyrI chains organized as three dimers (R2).

It catalyses the reaction carbamoyl phosphate + L-aspartate = N-carbamoyl-L-aspartate + phosphate + H(+). It functions in the pathway pyrimidine metabolism; UMP biosynthesis via de novo pathway; (S)-dihydroorotate from bicarbonate: step 2/3. Catalyzes the condensation of carbamoyl phosphate and aspartate to form carbamoyl aspartate and inorganic phosphate, the committed step in the de novo pyrimidine nucleotide biosynthesis pathway. This chain is Aspartate carbamoyltransferase catalytic subunit, found in Acinetobacter baylyi (strain ATCC 33305 / BD413 / ADP1).